The following is a 203-amino-acid chain: Large ribosomal subunit protein eL15 (203 aa).

Residues 160–186 (ESRGLTSTGKRSRGLNKGHRYNKTRAG) are disordered. Basic residues predominate over residues 169–186 (KRSRGLNKGHRYNKTRAG).

This sequence belongs to the eukaryotic ribosomal protein eL15 family. As to quaternary structure, component of the large ribosomal subunit (LSU). Mature N.crassa ribosomes consist of a small (40S) and a large (60S) subunit. The 40S small subunit contains 1 molecule of ribosomal RNA (18S rRNA) and at least 32 different proteins. The large 60S subunit contains 3 rRNA molecules (26S, 5.8S and 5S rRNA) and at least 42 different proteins.

The protein localises to the cytoplasm. Its function is as follows. Component of the ribosome, a large ribonucleoprotein complex responsible for the synthesis of proteins in the cell. The small ribosomal subunit (SSU) binds messenger RNAs (mRNAs) and translates the encoded message by selecting cognate aminoacyl-transfer RNA (tRNA) molecules. The large subunit (LSU) contains the ribosomal catalytic site termed the peptidyl transferase center (PTC), which catalyzes the formation of peptide bonds, thereby polymerizing the amino acids delivered by tRNAs into a polypeptide chain. The nascent polypeptides leave the ribosome through a tunnel in the LSU and interact with protein factors that function in enzymatic processing, targeting, and the membrane insertion of nascent chains at the exit of the ribosomal tunnel. In Neurospora crassa (strain ATCC 24698 / 74-OR23-1A / CBS 708.71 / DSM 1257 / FGSC 987), this protein is Large ribosomal subunit protein eL15 (rpl-15).